The chain runs to 156 residues: Probable cyclic pyranopterin monophosphate synthase (156 aa).

Substrate-binding positions include 73–75 and 109–110; these read LCH and ME. Asp124 is a catalytic residue.

It belongs to the MoaC family. In terms of assembly, homohexamer; trimer of dimers.

It carries out the reaction (8S)-3',8-cyclo-7,8-dihydroguanosine 5'-triphosphate = cyclic pyranopterin phosphate + diphosphate. Its pathway is cofactor biosynthesis; molybdopterin biosynthesis. Functionally, catalyzes the conversion of (8S)-3',8-cyclo-7,8-dihydroguanosine 5'-triphosphate to cyclic pyranopterin monophosphate (cPMP). The sequence is that of Probable cyclic pyranopterin monophosphate synthase from Pyrococcus furiosus (strain ATCC 43587 / DSM 3638 / JCM 8422 / Vc1).